The following is a 250-amino-acid chain: Type III pantothenate kinase (250 aa).

Position 13 to 20 (13 to 20 (DVGNSYLK)) interacts with ATP. Residue 110–113 (GNDL) participates in substrate binding. Catalysis depends on aspartate 112, which acts as the Proton acceptor. Threonine 134 provides a ligand contact to ATP. Threonine 186 serves as a coordination point for substrate.

It belongs to the type III pantothenate kinase family. Homodimer. The cofactor is NH4(+). K(+) serves as cofactor.

It is found in the cytoplasm. It carries out the reaction (R)-pantothenate + ATP = (R)-4'-phosphopantothenate + ADP + H(+). Its pathway is cofactor biosynthesis; coenzyme A biosynthesis; CoA from (R)-pantothenate: step 1/5. Catalyzes the phosphorylation of pantothenate (Pan), the first step in CoA biosynthesis. In Mycoplasmopsis synoviae (strain 53) (Mycoplasma synoviae), this protein is Type III pantothenate kinase.